A 245-amino-acid chain; its full sequence is Ribonuclease 3 (245 aa).

In terms of domain architecture, RNase III spans 19-144 (ASILEERTGH…LIATIYLDGG (126 aa)). Glutamate 57 lines the Mg(2+) pocket. Residue aspartate 61 is part of the active site. Residues aspartate 130 and glutamate 133 each coordinate Mg(2+). The active site involves glutamate 133. The DRBM domain occupies 169 to 238 (DAKTELQEWA…AEAMLYREGV (70 aa)).

This sequence belongs to the ribonuclease III family. In terms of assembly, homodimer. Mg(2+) is required as a cofactor.

It is found in the cytoplasm. The catalysed reaction is Endonucleolytic cleavage to 5'-phosphomonoester.. Its function is as follows. Digests double-stranded RNA. Involved in the processing of primary rRNA transcript to yield the immediate precursors to the large and small rRNAs (23S and 16S). Processes some mRNAs, and tRNAs when they are encoded in the rRNA operon. Processes pre-crRNA and tracrRNA of type II CRISPR loci if present in the organism. The chain is Ribonuclease 3 from Brucella abortus (strain S19).